Consider the following 103-residue polypeptide: MEVPGSSKKMIATQEEMSAAKIALGSRDMCAHLLIPLNKCRQAEFYLPWKCEDERHVYEKCEYELVMERMLAMKKIREEEALAKQNKLQGNAAVPLIPKTANA.

One can recognise a CHCH domain in the interval Arg-27–Arg-69. 2 consecutive short sequence motifs (cx9C motif) follow at residues Cys-30–Cys-40 and Cys-51–Cys-61. Cystine bridges form between Cys-30-Cys-61 and Cys-40-Cys-51.

Belongs to the complex I NDUFB7 subunit family. Complex I is composed of at least 49 different subunits.

It is found in the mitochondrion. Its subcellular location is the mitochondrion inner membrane. The protein localises to the mitochondrion intermembrane space. Accessory subunit of the mitochondrial membrane respiratory chain NADH dehydrogenase (Complex I), that is believed not to be involved in catalysis. Complex I functions in the transfer of electrons from NADH to the respiratory chain. The immediate electron acceptor for the enzyme is believed to be ubiquinone. The protein is NADH dehydrogenase [ubiquinone] 1 beta subcomplex subunit 7 of Arabidopsis thaliana (Mouse-ear cress).